The sequence spans 270 residues: Formamidopyrimidine-DNA glycosylase (270 aa).

The active-site Schiff-base intermediate with DNA is the Pro2. Glu3 functions as the Proton donor in the catalytic mechanism. Lys57 acts as the Proton donor; for beta-elimination activity in catalysis. The DNA site is built by His90, Arg109, and Arg151. An FPG-type zinc finger spans residues 236–270 (QVYGRGGKLCMVCSNRLKEVRLGQRSTVYCTQCQR). Arg260 (proton donor; for delta-elimination activity) is an active-site residue.

Belongs to the FPG family. In terms of assembly, monomer. Zn(2+) is required as a cofactor.

It carries out the reaction Hydrolysis of DNA containing ring-opened 7-methylguanine residues, releasing 2,6-diamino-4-hydroxy-5-(N-methyl)formamidopyrimidine.. It catalyses the reaction 2'-deoxyribonucleotide-(2'-deoxyribose 5'-phosphate)-2'-deoxyribonucleotide-DNA = a 3'-end 2'-deoxyribonucleotide-(2,3-dehydro-2,3-deoxyribose 5'-phosphate)-DNA + a 5'-end 5'-phospho-2'-deoxyribonucleoside-DNA + H(+). Its function is as follows. Involved in base excision repair of DNA damaged by oxidation or by mutagenic agents. Acts as a DNA glycosylase that recognizes and removes damaged bases. Has a preference for oxidized purines, such as 7,8-dihydro-8-oxoguanine (8-oxoG). Has AP (apurinic/apyrimidinic) lyase activity and introduces nicks in the DNA strand. Cleaves the DNA backbone by beta-delta elimination to generate a single-strand break at the site of the removed base with both 3'- and 5'-phosphates. This is Formamidopyrimidine-DNA glycosylase from Idiomarina loihiensis (strain ATCC BAA-735 / DSM 15497 / L2-TR).